The primary structure comprises 437 residues: Indole diterpene prenyltransferase anaPT (437 aa).

The tract at residues 1–28 is disordered; that stretch reads MSPLSMQTDSVQGTAENKSLETNGTSND. L-tryptophan-binding positions include 102–103 and E111; that span reads GF. Residues R124, K208, Y210, Y282, Q355, Y357, Y422, and Y426 each contribute to the dimethylallyl diphosphate site.

Belongs to the tryptophan dimethylallyltransferase family.

The enzyme catalyses (R)-benzodiazepinedione + dimethylallyl diphosphate = (2R,3S,11R)-aszonalenin + diphosphate. It catalyses the reaction (S)-benzodiazepinedione + dimethylallyl diphosphate = (2R,3S,11S)-aszonalenin + diphosphate. The protein operates within alkaloid biosynthesis. Its function is as follows. Indole diterpene prenyltransferase; part of the gene cluster that mediates the biosynthesis of the prenylated pyrroloindoline diketopiperazine acetylaszonalenin. The first step in the pathway is the formation of (R)-benzodiazepinedione by condensation of tryptophan and anthranilic acid catalyzed by the non-ribosomal peptide synthetase anaPS. The prenyltransferase anaPT then converts (R)-benzodiazepinedione to aszonalenin in the presence of dimethylallyl diphosphate (DMAPP) via C3-prenylation. The last step in the biosynthesis of acetylaszonalenin via acetylation of aszonalenin at position N1 catalyzed by anaAT. The polypeptide is Indole diterpene prenyltransferase anaPT (Neosartorya fischeri (strain ATCC 1020 / DSM 3700 / CBS 544.65 / FGSC A1164 / JCM 1740 / NRRL 181 / WB 181) (Aspergillus fischerianus)).